A 753-amino-acid chain; its full sequence is 5-methyltetrahydropteroyltriglutamate--homocysteine methyltransferase (753 aa).

5-methyltetrahydropteroyltri-L-glutamate contacts are provided by residues 17 to 20 (RELK) and Lys-117. L-homocysteine-binding positions include 431-433 (IGS) and Glu-484. Residues 431 to 433 (IGS) and Glu-484 each bind L-methionine. Residues 515–516 (RC) and Trp-561 contribute to the 5-methyltetrahydropteroyltri-L-glutamate site. Residue Asp-599 coordinates L-homocysteine. Asp-599 lines the L-methionine pocket. Glu-605 serves as a coordination point for 5-methyltetrahydropteroyltri-L-glutamate. Zn(2+)-binding residues include His-641, Cys-643, and Glu-665. His-694 serves as the catalytic Proton donor. Cys-726 lines the Zn(2+) pocket.

Belongs to the vitamin-B12 independent methionine synthase family. Zn(2+) serves as cofactor.

The enzyme catalyses 5-methyltetrahydropteroyltri-L-glutamate + L-homocysteine = tetrahydropteroyltri-L-glutamate + L-methionine. The protein operates within amino-acid biosynthesis; L-methionine biosynthesis via de novo pathway; L-methionine from L-homocysteine (MetE route): step 1/1. Its function is as follows. Catalyzes the transfer of a methyl group from 5-methyltetrahydrofolate to homocysteine resulting in methionine formation. The protein is 5-methyltetrahydropteroyltriglutamate--homocysteine methyltransferase of Escherichia coli O6:K15:H31 (strain 536 / UPEC).